The following is a 115-amino-acid chain: NADH-ubiquinone oxidoreductase chain 3 (115 aa).

3 helical membrane-spanning segments follow: residues 3 to 23 (FVLILMTNTLLALLLMIITFW), 55 to 75 (FFLVAITFLLFDLEIALLLPL), and 84 to 104 (LPLMVMSSLLLITILALSLAY).

The protein belongs to the complex I subunit 3 family. As to quaternary structure, core subunit of respiratory chain NADH dehydrogenase (Complex I) which is composed of 45 different subunits. Interacts with TMEM186. Interacts with TMEM242.

Its subcellular location is the mitochondrion inner membrane. It catalyses the reaction a ubiquinone + NADH + 5 H(+)(in) = a ubiquinol + NAD(+) + 4 H(+)(out). In terms of biological role, core subunit of the mitochondrial membrane respiratory chain NADH dehydrogenase (Complex I) which catalyzes electron transfer from NADH through the respiratory chain, using ubiquinone as an electron acceptor. Essential for the catalytic activity of complex I. The chain is NADH-ubiquinone oxidoreductase chain 3 from Pan paniscus (Pygmy chimpanzee).